A 122-amino-acid polypeptide reads, in one-letter code: Large ribosomal subunit protein uL14 (122 aa).

It belongs to the universal ribosomal protein uL14 family. Part of the 50S ribosomal subunit. Forms a cluster with proteins L3 and L19. In the 70S ribosome, L14 and L19 interact and together make contacts with the 16S rRNA in bridges B5 and B8.

Its function is as follows. Binds to 23S rRNA. Forms part of two intersubunit bridges in the 70S ribosome. In Paracoccus denitrificans (strain Pd 1222), this protein is Large ribosomal subunit protein uL14.